Here is a 1021-residue protein sequence, read N- to C-terminus: MGVLRVYVILILVGFCVQIVVVNSQNLTCNSNDLKALEGFMRGLESSIDGWKWNESSSFSSNCCDWVGISCKSSVSLGLDDVNESGRVVELELGRRKLSGKLSESVAKLDQLKVLNLTHNSLSGSIAASLLNLSNLEVLDLSSNDFSGLFPSLINLPSLRVLNVYENSFHGLIPASLCNNLPRIREIDLAMNYFDGSIPVGIGNCSSVEYLGLASNNLSGSIPQELFQLSNLSVLALQNNRLSGALSSKLGKLSNLGRLDISSNKFSGKIPDVFLELNKLWYFSAQSNLFNGEMPRSLSNSRSISLLSLRNNTLSGQIYLNCSAMTNLTSLDLASNSFSGSIPSNLPNCLRLKTINFAKIKFIAQIPESFKNFQSLTSLSFSNSSIQNISSALEILQHCQNLKTLVLTLNFQKEELPSVPSLQFKNLKVLIIASCQLRGTVPQWLSNSPSLQLLDLSWNQLSGTIPPWLGSLNSLFYLDLSNNTFIGEIPHSLTSLQSLVSKENAVEEPSPDFPFFKKKNTNAGGLQYNQPSSFPPMIDLSYNSLNGSIWPEFGDLRQLHVLNLKNNNLSGNIPANLSGMTSLEVLDLSHNNLSGNIPPSLVKLSFLSTFSVAYNKLSGPIPTGVQFQTFPNSSFEGNQGLCGEHASPCHITDQSPHGSAVKSKKNIRKIVAVAVGTGLGTVFLLTVTLLIILRTTSRGEVDPEKKADADEIELGSRSVVLFHNKDSNNELSLDDILKSTSSFNQANIIGCGGFGLVYKATLPDGTKVAIKRLSGDTGQMDREFQAEVETLSRAQHPNLVHLLGYCNYKNDKLLIYSYMDNGSLDYWLHEKVDGPPSLDWKTRLRIARGAAEGLAYLHQSCEPHILHRDIKSSNILLSDTFVAHLADFGLARLILPYDTHVTTDLVGTLGYIPPEYGQASVATYKGDVYSFGVVLLELLTGRRPMDVCKPRGSRDLISWVLQMKTEKRESEIFDPFIYDKDHAEEMLLVLEIACRCLGENPKTRPTTQQLVSWLENIDVSS.

The signal sequence occupies residues 1–24; sequence MGVLRVYVILILVGFCVQIVVVNS. One copy of the LRR 1 repeat lies at 21-43; that stretch reads VVNSQNLTCNSNDLKALEGFMRG. Residues asparagine 26, asparagine 54, and asparagine 83 are each glycosylated (N-linked (GlcNAc...) asparagine). LRR repeat units follow at residues 85–109, 110–133, 135–156, 158–180, 181–205, 206–229, 231–252, 253–277, 301–325, 326–349, 351–372, 373–397, 402–426, 428–448, 449–474, and 476–496; these read SGRV…VAKL, DQLK…LLNL, NLEV…LINL, SLRV…LCNN, LPRI…IGNC, SSVE…LFQL, NLSV…KLGK, LSNL…FLEL, SRSI…CSAM, TNLT…LPNC, RLKT…SFKN, FQSL…EILQ, LKTL…QFKN, KVLI…LSNS, PSLQ…SLNS, and FYLD…LTSL. Asparagine 116 and asparagine 132 each carry an N-linked (GlcNAc...) asparagine glycan. Residues asparagine 204, asparagine 217, and asparagine 231 are each glycosylated (N-linked (GlcNAc...) asparagine). N-linked (GlcNAc...) asparagine glycosylation is found at asparagine 311, asparagine 321, and asparagine 327. N-linked (GlcNAc...) asparagine glycans are attached at residues asparagine 383 and asparagine 388. 5 N-linked (GlcNAc...) asparagine glycosylation sites follow: asparagine 482, asparagine 546, asparagine 568, asparagine 576, and asparagine 592. One copy of the LRR 18; atypical repeat lies at 498–555; sequence SLVSKENAVEEPSPDFPFFKKKNTNAGGLQYNQPSSFPPMIDLSYNSLNGSIWPEFGD. LRR repeat units follow at residues 556–580, 581–604, and 606–629; these read LRQL…LSGM, TSLE…LVKL, and FLST…QFQT. Asparagine 632 carries N-linked (GlcNAc...) asparagine glycosylation. The chain crosses the membrane as a helical span at residues 673-693; that stretch reads VAVGTGLGTVFLLTVTLLIIL. Positions 743–1014 constitute a Protein kinase domain; sequence FNQANIIGCG…PTTQQLVSWL (272 aa). ATP-binding positions include 749–757 and lysine 771; that span reads IGCGGFGLV. Aspartate 869 functions as the Proton acceptor in the catalytic mechanism.

Belongs to the protein kinase superfamily. Ser/Thr protein kinase family. N-glycosylated. Expressed ubiquitously in leaf, apical meristem, hypocotyl and root.

The protein resides in the cell membrane. The catalysed reaction is L-seryl-[protein] + ATP = O-phospho-L-seryl-[protein] + ADP + H(+). It carries out the reaction L-threonyl-[protein] + ATP = O-phospho-L-threonyl-[protein] + ADP + H(+). Phytosulfokine receptor with a serine/threonine-protein kinase activity. Regulates, in response to phytosulfokine binding, a signaling cascade involved in plant cell differentiation, organogenesis and somatic embryogenesis. The sequence is that of Phytosulfokine receptor 1 (PSKR) from Daucus carota (Wild carrot).